The chain runs to 153 residues: Transcriptional repressor NrdR (153 aa).

The segment at 3–34 is a zinc-finger region; that stretch reads CPFCNNINTQVKDSRAIEDDILIRRRRICLVC. Residues 49 to 139 enclose the ATP-cone domain; sequence FMVIKKNGET…VYMNFKNIND (91 aa).

The protein belongs to the NrdR family. It depends on Zn(2+) as a cofactor.

Functionally, negatively regulates transcription of bacterial ribonucleotide reductase nrd genes and operons by binding to NrdR-boxes. This Ehrlichia canis (strain Jake) protein is Transcriptional repressor NrdR.